The following is a 499-amino-acid chain: U4/U6 small nuclear ribonucleoprotein Prp31 (499 aa).

The disordered stretch occupies residues 1-43; the sequence is MSLADELLADLEEAAEEEEGGSYGEEEEEPAIEDVQEETQLDL. A compositionally biased stretch (acidic residues) spans 7-40; the sequence is LLADLEEAAEEEEGGSYGEEEEEPAIEDVQEETQ. 2 coiled-coil regions span residues 85-120 and 181-215; these read EAAP…KYSK and DEEL…MSFI. Positions 215-333 constitute a Nop domain; it reads IAPNLSIIIG…IERKFDKWQE (119 aa). The segment at 334-357 is disordered; that stretch reads PPPVKQVKPLPAPLDGQRKKRGGR. The Nuclear localization signal (NLS) signature appears at 351 to 364; it reads RKKRGGRRYRKMKE. Residues Ser-379, Ser-395, and Ser-432 each carry the phosphoserine modification. Lys-438 carries the N6-acetyllysine modification. Position 439 is a phosphoserine (Ser-439). Thr-440 carries the post-translational modification Phosphothreonine. The residue at position 450 (Ser-450) is a Phosphoserine. Residue Thr-455 is modified to Phosphothreonine. Glycyl lysine isopeptide (Lys-Gly) (interchain with G-Cter in SUMO2) cross-links involve residues Lys-471 and Lys-478.

Belongs to the PRP31 family. In terms of assembly, identified in the spliceosome B complex. Component of the U4/U6-U5 tri-snRNP complex composed of the U4, U6 and U5 snRNAs and at least PRPF3, PRPF4, PRPF6, PRPF8, PRPF31, SNRNP200, TXNL4A, SNRNP40, DDX23, CD2BP2, PPIH, SNU13, EFTUD2, SART1 and USP39. Interacts with a complex formed by SNU13 and U4 snRNA, but not with SNU13 or U4 snRNA alone. The complex formed by SNU13 and PRPF31 also binds U4atac snRNA, a characteristic component of specific, less abundant spliceosomal complexes. Interacts with PRPF6/U5 snRNP-associated 102 kDa protein. Component of some MLL1/MLL complex, at least composed of the core components KMT2A/MLL1, ASH2L, HCFC1/HCF1, WDR5 and RBBP5, as well as the facultative components BACC1, CHD8, E2F6, HSP70, INO80C, KANSL1, LAS1L, MAX, MCRS1, MGA, KAT8/MOF, PELP1, PHF20, PRP31, RING2, RUVB1/TIP49A, RUVB2/TIP49B, SENP3, TAF1, TAF4, TAF6, TAF7, TAF9 and TEX10. Interacts (via its NLS) with CTNNBL1. Interacts with USH1G. Post-translationally, phosphorylated by PRP4K during spliceosome assembly.

The protein localises to the nucleus. Its subcellular location is the nucleus speckle. The protein resides in the cajal body. In terms of biological role, involved in pre-mRNA splicing as component of the spliceosome. Required for the assembly of the U4/U5/U6 tri-snRNP complex, one of the building blocks of the spliceosome. This is U4/U6 small nuclear ribonucleoprotein Prp31 (Prpf31) from Mus musculus (Mouse).